The chain runs to 1134 residues: Vinculin (1134 aa).

Residues 1–835 (MPVFHTRTIE…GAVAKVREAF (835 aa)) are N-terminal globular head. A Phosphoserine modification is found at S97. The talin-interaction stretch occupies residues 168–208 (MTKMAKMIDERQQELTHQEHRVMLVNSMNTVKELLPVLISA). Position 173 is an N6-acetyllysine (K173). 3 consecutive repeat copies span residues 259-369 (ASKD…KVEN), 370-479 (AARK…KTNR), and 480-589 (AVAN…RMQE). A 3 X 112 AA tandem repeats region spans residues 259-589 (ASKDTEAMKR…LKDLKARMQE (331 aa)). Phosphoserine occurs at positions 260, 272, 275, 288, 290, 346, and 434. At K496 the chain carries N6-acetyllysine. Residue Y537 is modified to Phosphotyrosine. A phosphoserine mark is found at S574, S579, and S600. Residues T604 and T672 each carry the phosphothreonine modification. Position 721 is a phosphoserine (S721). Residues 741–764 (MANIQPQMLVAGATSIARRANRIL) are interaction with ACTN4. Phosphoserine occurs at positions 795 and 809. Residue Y822 is modified to Phosphotyrosine. Positions 836-878 (QPQEPDFPPPPPDLEQLRLTDELAPPKPPLPEGEVPPPRPPPP) are linker (Pro-rich). The interval 857–887 (ELAPPKPPLPEGEVPPPRPPPPEEKDEEFPE) is disordered. Over residues 860 to 876 (PPKPPLPEGEVPPPRPP) the composition is skewed to pro residues. The C-terminal tail stretch occupies residues 879–1134 (EEKDEEFPEQ…RWVRKTPWYQ (256 aa)). Facilitates phospholipid membrane insertion regions lie at residues 1003-1046 (RLVR…KRIR) and 1120-1134 (AGFT…PWYQ). Residue Y1133 is modified to Phosphotyrosine; by SRC-type Tyr-kinases.

The protein belongs to the vinculin/alpha-catenin family. As to quaternary structure, exhibits self-association properties. Part of a complex composed of THSD1, PTK2/FAK1, TLN1 and VCL. Interacts with APBB1IP and NRAP. Interacts with TLN1. Interacts with CTNNB1 and this interaction is necessary for its localization to the cell-cell junctions and for its function in regulating cell surface expression of E-cadherin. Interacts with SYNM. Interacts with SORBS1. Interacts with CTNNA1. Binds to ACTN4; this interaction triggers conformational changes. Interacts with FLII. In terms of assembly, (Microbial infection) Interacts via its globular head domain with the central portion of S.flexneri IcsA (also called VirG). Phosphorylated; on serines, threonines and tyrosines. Phosphorylation on Tyr-1133 in activated platelets affects head-tail interactions and cell spreading but has no effect on actin binding nor on localization to focal adhesion plaques. Post-translationally, acetylated; mainly by myristic acid but also by a small amount of palmitic acid. As to expression, metavinculin is muscle-specific.

Its subcellular location is the cell membrane. The protein resides in the cell junction. The protein localises to the adherens junction. It localises to the focal adhesion. It is found in the cytoplasm. Its subcellular location is the cytoskeleton. The protein resides in the sarcolemma. The protein localises to the cell projection. It localises to the podosome. Actin filament (F-actin)-binding protein involved in cell-matrix adhesion and cell-cell adhesion. Regulates cell-surface E-cadherin expression and potentiates mechanosensing by the E-cadherin complex. May also play important roles in cell morphology and locomotion. This chain is Vinculin (VCL), found in Homo sapiens (Human).